A 471-amino-acid chain; its full sequence is Ubiquitin carboxyl-terminal hydrolase calypso (471 aa).

The region spanning Gly45–Pro276 is the UCH catalytic domain. Catalysis depends on Cys131, which acts as the Nucleophile. His213 acts as the Proton donor in catalysis. The disordered stretch occupies residues Asp307–Leu326. Over residues Asn314–Leu326 the composition is skewed to polar residues. The 29-residue stretch at Asn375–Pro403 folds into the ULD domain. The tract at residues Lys405–Lys471 is positively charged C-terminal tail required for binding nucleosomes. A disordered region spans residues Ala412–Lys471. A compositionally biased stretch (low complexity) spans Thr422–Ala447. Positions Pro457 to Lys471 are enriched in basic residues.

It belongs to the peptidase C12 family. BAP1 subfamily. As to quaternary structure, catalytic component of the polycomb repressive deubiquitinase (PR-DUB) complex, at least composed of caly/calypso, Asx and sba (MBD5/6 homolog). The PR-DUB complex associates with nucleosomes to mediate deubiquitination of histone H2AK118ub1 substrates; the association requires the positively charged C-terminal tail of caly, probably due to direct binding of DNA. Interacts (via ULD domain) with Asx (via DEUBAD domain); the interaction produces a stable heterodimer with a composite binding site for ubiquitin. Homodimerizes (via coiled-coil hinge-region between the UCH and ULD domains) to mediate assembly of 2 copies of the caly-Asx heterodimer into a bisymmetric tetramer; dimerization enhances PR-DUB association with nucleosomes.

The protein localises to the nucleus. It catalyses the reaction Thiol-dependent hydrolysis of ester, thioester, amide, peptide and isopeptide bonds formed by the C-terminal Gly of ubiquitin (a 76-residue protein attached to proteins as an intracellular targeting signal).. In terms of biological role, catalytic component of the polycomb repressive deubiquitinase (PR-DUB) complex, a complex that specifically mediates deubiquitination of histone H2A monoubiquitinated at 'Lys-119' (H2AK118ub1). Mediates bisymmetric organization of the PR-DUB complex and is involved in association with nucleosomes to mediate deubiquitination. Does not deubiquitinate monoubiquitinated histone H2B. Required to maintain the transcriptionally repressive state of homeotic genes throughout development. The PR-DUB complex has weak or no activity toward 'Lys-48'- and 'Lys-63'-linked polyubiquitin chains. Polycomb group (PcG) protein. This chain is Ubiquitin carboxyl-terminal hydrolase calypso, found in Drosophila sechellia (Fruit fly).